The primary structure comprises 95 residues: Large ribosomal subunit protein uL24c (95 aa).

This sequence belongs to the universal ribosomal protein uL24 family. Part of the 50S ribosomal subunit.

It localises to the plastid. The protein localises to the chloroplast. In terms of biological role, one of two assembly initiator proteins, it binds directly to the 5'-end of the 23S rRNA, where it nucleates assembly of the 50S subunit. The sequence is that of Large ribosomal subunit protein uL24c (rpl24) from Porphyra purpurea (Red seaweed).